The following is a 299-amino-acid chain: ATP phosphoribosyltransferase (299 aa).

Belongs to the ATP phosphoribosyltransferase family. Long subfamily. Equilibrium between an active dimeric form, an inactive hexameric form and higher aggregates. Interconversion between the various forms is largely reversible and is influenced by the natural substrates and inhibitors of the enzyme. Mg(2+) is required as a cofactor.

The protein localises to the cytoplasm. The enzyme catalyses 1-(5-phospho-beta-D-ribosyl)-ATP + diphosphate = 5-phospho-alpha-D-ribose 1-diphosphate + ATP. The protein operates within amino-acid biosynthesis; L-histidine biosynthesis; L-histidine from 5-phospho-alpha-D-ribose 1-diphosphate: step 1/9. With respect to regulation, feedback inhibited by histidine. Its function is as follows. Catalyzes the condensation of ATP and 5-phosphoribose 1-diphosphate to form N'-(5'-phosphoribosyl)-ATP (PR-ATP). Has a crucial role in the pathway because the rate of histidine biosynthesis seems to be controlled primarily by regulation of HisG enzymatic activity. This is ATP phosphoribosyltransferase from Serratia proteamaculans (strain 568).